The primary structure comprises 361 residues: 3-dehydroquinate synthase (361 aa).

NAD(+) contacts are provided by residues 69 to 74 (DGEEYK), 103 to 107 (GVIGD), 127 to 128 (TT), Lys-140, Lys-149, and 167 to 170 (TLDT). Residues Glu-182, His-245, and His-262 each coordinate Zn(2+).

Belongs to the sugar phosphate cyclases superfamily. Dehydroquinate synthase family. The cofactor is Co(2+). Zn(2+) is required as a cofactor. It depends on NAD(+) as a cofactor.

The protein localises to the cytoplasm. The enzyme catalyses 7-phospho-2-dehydro-3-deoxy-D-arabino-heptonate = 3-dehydroquinate + phosphate. It participates in metabolic intermediate biosynthesis; chorismate biosynthesis; chorismate from D-erythrose 4-phosphate and phosphoenolpyruvate: step 2/7. Its function is as follows. Catalyzes the conversion of 3-deoxy-D-arabino-heptulosonate 7-phosphate (DAHP) to dehydroquinate (DHQ). The chain is 3-dehydroquinate synthase from Thioalkalivibrio sulfidiphilus (strain HL-EbGR7).